The primary structure comprises 508 residues: MGLPWYRVHTVVLNDPGRLLSVHIMHTALVSGWAGSMALYELAVFDPSDPVLDPMWRQGMFVIPFMTRLGITNSWGGWSISGGSITNPGIWSYEGVAGAHIVFSGLCFLAAIWHWVYWDLEIFCDERTGKPSLDLPKIFGIHLFLSGLACFGFGAFHVTGLYGPGIWVSDPYGLTGKVQSINPAWGVEGFDPFVPGGIASHHIAAGTLGILAGLFHLSVRPPQRLYKGLRMGNIETVLSSSIAAVFFAAFVVAGTMWYGSATTPIELFGPTRYQWDQGYFQQEIYRRVGVGLAENLSLSEAWSKIPEKLAFYDYIGNNPAKGGLFRAGSMDNGDGIAVGWLGHPIFRDKEGRELFVRRMPTFFETFPVVLVDVDGIVRADVPFRRAESKYSVEQVGVTVEFYGGELNGVSYSDPTTVKKYARRAQLGEIFELDRATLKSDGVFRSSPRGWFTFGHASFALLFFFGHIWHGARTLFRDVFAGIDPDLDAQVEFGAFQKIGDPTTRRQAV.

The next 6 helical transmembrane spans lie at 21-36, 101-115, 140-156, 203-218, 237-252, and 457-472; these read SVHI…WAGS, IVFS…IWHW, GIHL…FGAF, IAAG…FHLS, VLSS…AFVV, and SFAL…HGAR.

This sequence belongs to the PsbB/PsbC family. PsbB subfamily. In terms of assembly, PSII is composed of 1 copy each of membrane proteins PsbA, PsbB, PsbC, PsbD, PsbE, PsbF, PsbH, PsbI, PsbJ, PsbK, PsbL, PsbM, PsbT, PsbX, PsbY, PsbZ, Psb30/Ycf12, at least 3 peripheral proteins of the oxygen-evolving complex and a large number of cofactors. It forms dimeric complexes. The cofactor is Binds multiple chlorophylls. PSII binds additional chlorophylls, carotenoids and specific lipids..

Its subcellular location is the plastid. The protein resides in the chloroplast thylakoid membrane. In terms of biological role, one of the components of the core complex of photosystem II (PSII). It binds chlorophyll and helps catalyze the primary light-induced photochemical processes of PSII. PSII is a light-driven water:plastoquinone oxidoreductase, using light energy to abstract electrons from H(2)O, generating O(2) and a proton gradient subsequently used for ATP formation. The sequence is that of Photosystem II CP47 reaction center protein from Dioscorea elephantipes (Elephant's foot yam).